Consider the following 328-residue polypeptide: E3 ubiquitin-protein ligase RING1-like (328 aa).

Ser-2 bears the N-acetylserine mark. The RING-type; atypical zinc finger occupies 216–257 (CAVCMDEFEDGSDVKQMPCKHVFHQDCLLPWLELHNSCPVCR). Residues 264-328 (DPDYENRSQG…NLETRGEDLD (65 aa)) form a disordered region. Gly residues predominate over residues 306–319 (SGSGSGAPGTGGGN).

Auto-ubiquitinated as part of the enzymatic reaction. In terms of tissue distribution, expressed in leaves, roots, trichomes, stipules, and also in anthers and stigma of flowers.

The enzyme catalyses S-ubiquitinyl-[E2 ubiquitin-conjugating enzyme]-L-cysteine + [acceptor protein]-L-lysine = [E2 ubiquitin-conjugating enzyme]-L-cysteine + N(6)-ubiquitinyl-[acceptor protein]-L-lysine.. The protein operates within protein modification; protein ubiquitination. Functionally, E3 ubiquitin-protein ligase which accepts ubiquitin from an E2 ubiquitin-conjugating enzyme in the form of a thioester and then directly transfers the ubiquitin to targeted substrates. Promotes polyubiquitination of target proteins. This Arabidopsis thaliana (Mouse-ear cress) protein is E3 ubiquitin-protein ligase RING1-like.